The sequence spans 258 residues: Thiazole synthase 2 (258 aa).

The Schiff-base intermediate with DXP role is filled by lysine 97. 1-deoxy-D-xylulose 5-phosphate contacts are provided by residues glycine 158, 184-185 (AG), and 206-207 (NT).

It belongs to the ThiG family. As to quaternary structure, homotetramer. Forms heterodimers with either ThiH or ThiS.

It localises to the cytoplasm. It carries out the reaction [ThiS sulfur-carrier protein]-C-terminal-Gly-aminoethanethioate + 2-iminoacetate + 1-deoxy-D-xylulose 5-phosphate = [ThiS sulfur-carrier protein]-C-terminal Gly-Gly + 2-[(2R,5Z)-2-carboxy-4-methylthiazol-5(2H)-ylidene]ethyl phosphate + 2 H2O + H(+). Its pathway is cofactor biosynthesis; thiamine diphosphate biosynthesis. Catalyzes the rearrangement of 1-deoxy-D-xylulose 5-phosphate (DXP) to produce the thiazole phosphate moiety of thiamine. Sulfur is provided by the thiocarboxylate moiety of the carrier protein ThiS. In vitro, sulfur can be provided by H(2)S. This is Thiazole synthase 2 from Syntrophotalea carbinolica (strain DSM 2380 / NBRC 103641 / GraBd1) (Pelobacter carbinolicus).